The sequence spans 316 residues: uncharacterized protein (316 aa).

The protein belongs to the chlamydial CPn_0441/CT_007/TC_0275 family.

This is an uncharacterized protein from Chlamydia trachomatis serovar D (strain ATCC VR-885 / DSM 19411 / UW-3/Cx).